Reading from the N-terminus, the 741-residue chain is MKFQEGVFLVVIFFLAYTQLVKGQHQPREDCKLKCGNVTIEYPFGISTGCYYPGDDNFNLTCVVEEKLLLFGIIQVTNISHSGHVSVLFERFSECYEQKNETNGTALGYQLGSSFSLSSNNKFTLVGCNALSLLSTFGKQNYSTGCLSLCNSQPEANGRCNGVGCCTTEDFSVPFDSDTFQFGSVRLRNQVNNSLDLFNTSVYQFNPCTYAFLVEDGKFNFDSSKDLKNLRNVTRFPVALDWSIGNQTCEQAGSTRICGKNSSCYNSTTRNGYICKCNEGYDGNPYRSEGCKDIDECISDTHNCSDPKTCRNRDGGFDCKCPSGYDLNSSMSCTRPEYKRTRIFLVIIIGVLVLLLAAICIQHATKQRKYTKLRRQFFEQNGGGMLIQRLSGAGLSNIDFKIFTEEGMKEATNGYDESRILGQGGQGTVYKGILPDNTIVAIKKARLADSRQVDQFIHEVLVLSQINHRNVVKILGCCLETEVPLLVYEFITNGTLFDHLHGSIFDSSLTWEHRLRIAIEVAGTLAYLHSSASIPIIHRDIKTANILLDENLTAKVADFGASKLIPMDKEQLTTMVQGTLGYLDPEYYTTGLLNEKSDVYSFGVVLMELLSGQKALCFERPQASKHLVSYFVSATEENRLHEIIDDQVLNEDNLKEIQEAARIAAECTRLMGEERPRMKEVAAKLEALRVEKTKHKWSDQYPEENEHLIGGHILSAQGETSSSIGYDSIKNVAILDIETGR.

Residues 1-23 (MKFQEGVFLVVIFFLAYTQLVKG) form the signal peptide. At 24–342 (QHQPREDCKL…CTRPEYKRTR (319 aa)) the chain is on the extracellular side. 12 N-linked (GlcNAc...) asparagine glycosylation sites follow: Asn-37, Asn-59, Asn-78, Asn-100, Asn-103, Asn-141, Asn-192, Asn-199, Asn-232, Asn-246, Asn-261, and Asn-266. The 48-residue stretch at 245–292 (GNQTCEQAGSTRICGKNSSCYNSTTRNGYICKCNEGYDGNPYRSEGCK) folds into the EGF-like 1 domain. 6 cysteine pairs are disulfide-bonded: Cys-249–Cys-264, Cys-258–Cys-275, Cys-277–Cys-291, Cys-297–Cys-310, Cys-304–Cys-319, and Cys-321–Cys-333. The EGF-like 2; calcium-binding domain occupies 293–334 (DIDECISDTHNCSDPKTCRNRDGGFDCKCPSGYDLNSSMSCT). An N-linked (GlcNAc...) asparagine glycan is attached at Asn-303. Residue Asn-328 is glycosylated (N-linked (GlcNAc...) asparagine). The chain crosses the membrane as a helical span at residues 343 to 363 (IFLVIIIGVLVLLLAAICIQH). The Cytoplasmic portion of the chain corresponds to 364–741 (ATKQRKYTKL…VAILDIETGR (378 aa)). At Thr-404 the chain carries Phosphothreonine. One can recognise a Protein kinase domain in the interval 415–698 (YDESRILGQG…RVEKTKHKWS (284 aa)). ATP-binding positions include 421–429 (LGQGGQGTV) and Lys-443. Tyr-488 bears the Phosphotyrosine mark. Asp-540 (proton acceptor) is an active-site residue. Thr-574 and Thr-579 each carry phosphothreonine. The residue at position 587 (Tyr-587) is a Phosphotyrosine.

The protein belongs to the protein kinase superfamily. Ser/Thr protein kinase family. Predominantly expressed in green tissues such as stems and leaves.

It is found in the membrane. The catalysed reaction is L-seryl-[protein] + ATP = O-phospho-L-seryl-[protein] + ADP + H(+). It catalyses the reaction L-threonyl-[protein] + ATP = O-phospho-L-threonyl-[protein] + ADP + H(+). Serine/threonine-protein kinase that may function as a signaling receptor of extracellular matrix component. Binding to pectin may have significance in the control of cell expansion, morphogenesis and development. The sequence is that of Wall-associated receptor kinase 3 (WAK3) from Arabidopsis thaliana (Mouse-ear cress).